The sequence spans 336 residues: uncharacterized protein (336 aa).

The 201-residue stretch at 123-323 (KTLMRDSGVP…YSSLINGILD (201 aa)) folds into the ATP-grasp domain.

It belongs to the D-alanine--D-alanine ligase family.

Its function is as follows. Could be involved in the biosynthesis of a cell wall component. This is an uncharacterized protein from Sinorhizobium fredii (strain NBRC 101917 / NGR234).